The sequence spans 299 residues: MAEEQAYHVSKGLECIKALRENPPNMEEIQEVSNIRDQTYKSSKESGTTGVQEEEITQNIDESHTPTKRSNSVSDVLQEDQRGREDNTAPVEAKDRIEEDTQTGPAVRRYYVYDHCGEKVKGIEDADSLMVPAGPPSNRGFEGREGSLDDSIEDSSEDYSEGNASSNWGYTFGLNPDRAADVSMLMEEELTALLGTGHNAGGQKRDGRTLQFPNSPEGSIGNQACEPIKKGHRREVSLTWNDDRCWIDKWCNPICTQVNWGVIRAKCICGECPPVCDDCKDDPEMQNRIWYETPTRETK.

Disordered stretches follow at residues 30-101 and 128-163; these read QEVS…EEDT and SLMV…SEGN. Basic and acidic residues predominate over residues 79–99; it reads EDQRGREDNTAPVEAKDRIEE. The segment covering 148–160 has biased composition (acidic residues); that stretch reads LDDSIEDSSEDYS. Zn(2+) is bound by residues His232, Cys251, Cys255, Cys267, Cys269, Cys272, Cys276, and Cys279.

In terms of biological role, blocks host interferon signaling. The chain is Non-structural protein V (P/V) from Phocidae (true seals).